The chain runs to 388 residues: NADH-quinone oxidoreductase subunit D 2 (388 aa).

The protein belongs to the complex I 49 kDa subunit family. NDH-1 is composed of 14 different subunits. Subunits NuoB, C, D, E, F, and G constitute the peripheral sector of the complex.

It localises to the cell inner membrane. The enzyme catalyses a quinone + NADH + 5 H(+)(in) = a quinol + NAD(+) + 4 H(+)(out). Its function is as follows. NDH-1 shuttles electrons from NADH, via FMN and iron-sulfur (Fe-S) centers, to quinones in the respiratory chain. The immediate electron acceptor for the enzyme in this species is believed to be ubiquinone. Couples the redox reaction to proton translocation (for every two electrons transferred, four hydrogen ions are translocated across the cytoplasmic membrane), and thus conserves the redox energy in a proton gradient. This is NADH-quinone oxidoreductase subunit D 2 from Sorangium cellulosum (strain So ce56) (Polyangium cellulosum (strain So ce56)).